A 417-amino-acid polypeptide reads, in one-letter code: Phosphoglycerate kinase 1 (417 aa).

Position 2 is an N-acetylserine (Ser-2). 2 positions are modified to phosphoserine: Ser-2 and Ser-4. N6-succinyllysine is present on Lys-6. Position 11 is an N6-acetyllysine (Lys-11). (2R)-3-phosphoglycerate is bound by residues Val-23, Asp-24, Phe-25, Asn-26, Gln-38, and Arg-39. Residues 38-43 form a mitochondrial targeting region exposed following cis-trans isomerization by PIN1 and recognized by the TOM complex for mitochondrial translocation of the protein region; sequence QRIKAA. Lys-48 is subject to N6-acetyllysine; alternate. N6-succinyllysine; alternate is present on Lys-48. (2R)-3-phosphoglycerate contacts are provided by Ser-62, His-63, Gly-65, and Arg-66. At Lys-75 the chain carries N6-acetyllysine. Position 76 is a phosphotyrosine (Tyr-76). Lys-86 and Lys-91 each carry N6-acetyllysine. Lys-97 carries the N6-acetyllysine; alternate modification. Lys-97 bears the N6-(2-hydroxyisobutyryl)lysine; alternate mark. Positions 122 and 123 each coordinate (2R)-3-phosphoglycerate. Lys-131 is modified (N6-acetyllysine; alternate). N6-malonyllysine; alternate is present on Lys-131. Lys-146 is modified (N6-acetyllysine). The (2R)-3-phosphoglycerate site is built by His-170 and Arg-171. An N6-succinyllysine modification is found at Lys-191. Tyr-196 carries the post-translational modification Phosphotyrosine. An N6-acetyllysine modification is found at Lys-199. A Phosphoserine modification is found at Ser-203. Gly-214 contributes to the ADP binding site. Gly-214 provides a ligand contact to CDP. AMP-binding residues include Ala-215 and Lys-216. Ala-215 serves as a coordination point for ATP. Ala-215 serves as a coordination point for Mg(2+). Position 216 is an N6-(2-hydroxyisobutyryl)lysine (Lys-216). 2 residues coordinate Mg(2+): Ala-218 and Asp-219. A CDP-binding site is contributed by Asp-219. Lys-220 contacts AMP. Lys-220 is a binding site for ATP. Position 220 is an N6-(2-hydroxyisobutyryl)lysine (Lys-220). Residue Gly-238 coordinates ADP. Gly-238 is a CDP binding site. Gly-239 contributes to the AMP binding site. Position 239 (Gly-239) interacts with ATP. An N6-acetyllysine mark is found at Lys-267 and Lys-291. Gly-313 provides a ligand contact to AMP. Gly-313 contacts ATP. Lys-323 bears the N6-(2-hydroxyisobutyryl)lysine mark. CDP-binding residues include Gly-338, Val-340, and Phe-343. ADP is bound at residue Phe-343. AMP is bound at residue Glu-344. Glu-344 is an ATP binding site. The residue at position 361 (Lys-361) is an N6-acetyllysine. ATP is bound by residues Asp-375 and Thr-376. Asp-375 lines the Mg(2+) pocket.

Belongs to the phosphoglycerate kinase family. As to quaternary structure, monomer. Interacts with kinase MAPK1/ERK2; the interaction is direct, occurs under hypoxic conditions, and promotes its interaction with PIN1. Interacts with peptidyl-prolyl cis-trans isomerase PIN1; the interaction is direct, occurs under hypoxic conditions, and targets the protein to the mitochondrion by promoting interactions with the TOM complex. Interacts with mitochondrial circRNA mcPGK1 (via its 2nd stem-loop); the interaction is direct and targets the protein to the mitochondrion by promoting interactions with the TOM complex. Interacts with pyruvate dehydrogenase kinase PDK1; the interaction is direct, occurs under hypoxic conditions and leads to PDK1-mediated inhibition of pyruvate dehydrogenase complex activity. The cofactor is Mg(2+). Phosphorylated at Ser-203 by MAPK1/ERK2 under hypoxic conditions, which promotes its mitochondrial targeting.

It is found in the cytoplasm. The protein localises to the cytosol. It localises to the mitochondrion matrix. The catalysed reaction is (2R)-3-phosphoglycerate + ATP = (2R)-3-phospho-glyceroyl phosphate + ADP. The enzyme catalyses L-seryl-[protein] + ATP = O-phospho-L-seryl-[protein] + ADP + H(+). The protein operates within carbohydrate degradation; glycolysis; pyruvate from D-glyceraldehyde 3-phosphate: step 2/5. Its function is as follows. Catalyzes one of the two ATP producing reactions in the glycolytic pathway via the reversible conversion of 1,3-diphosphoglycerate to 3-phosphoglycerate. Both L- and D- forms of purine and pyrimidine nucleotides can be used as substrates, but the activity is much lower on pyrimidines. In addition to its role as a glycolytic enzyme, it seems that PGK-1 acts as a polymerase alpha cofactor protein (primer recognition protein). Acts as a protein kinase when localized to the mitochondrion where it phosphorylates pyruvate dehydrogenase kinase PDK1 to inhibit pyruvate dehydrogenase complex activity and suppress the formation of acetyl-coenzyme A from pyruvate, and consequently inhibit oxidative phosphorylation and promote glycolysis. May play a role in sperm motility. In Macaca fascicularis (Crab-eating macaque), this protein is Phosphoglycerate kinase 1 (PGK1).